The following is a 101-amino-acid chain: Aspartyl/glutamyl-tRNA(Asn/Gln) amidotransferase subunit C (101 aa).

The tract at residues 75-101 (QEALSGAPDAEEQRFRVPRILDEDVAS) is disordered. Residues 85-101 (EEQRFRVPRILDEDVAS) show a composition bias toward basic and acidic residues.

It belongs to the GatC family. In terms of assembly, heterotrimer of A, B and C subunits.

It catalyses the reaction L-glutamyl-tRNA(Gln) + L-glutamine + ATP + H2O = L-glutaminyl-tRNA(Gln) + L-glutamate + ADP + phosphate + H(+). It carries out the reaction L-aspartyl-tRNA(Asn) + L-glutamine + ATP + H2O = L-asparaginyl-tRNA(Asn) + L-glutamate + ADP + phosphate + 2 H(+). Its function is as follows. Allows the formation of correctly charged Asn-tRNA(Asn) or Gln-tRNA(Gln) through the transamidation of misacylated Asp-tRNA(Asn) or Glu-tRNA(Gln) in organisms which lack either or both of asparaginyl-tRNA or glutaminyl-tRNA synthetases. The reaction takes place in the presence of glutamine and ATP through an activated phospho-Asp-tRNA(Asn) or phospho-Glu-tRNA(Gln). The polypeptide is Aspartyl/glutamyl-tRNA(Asn/Gln) amidotransferase subunit C (Salinispora arenicola (strain CNS-205)).